The chain runs to 346 residues: Holliday junction branch migration complex subunit RuvB (346 aa).

Positions 1–182 are large ATPase domain (RuvB-L); sequence MSERLVTSNE…LGVLCSMEYY (182 aa). Residues Leu21, Arg22, Gly63, Lys66, Thr67, Thr68, 129-131, Arg172, Tyr182, and Arg219 each bind ATP; that span reads EDY. Thr67 serves as a coordination point for Mg(2+). Residues 183 to 253 form a small ATPAse domain (RuvB-S) region; sequence TDEQLKEIII…AAKKSLEILE (71 aa). The segment at 256 to 346 is head domain (RuvB-H); it reads GEGFDRIDNK…DSKQCTLFEK (91 aa). Residues Arg311 and Arg316 each contribute to the DNA site.

It belongs to the RuvB family. In terms of assembly, homohexamer. Forms an RuvA(8)-RuvB(12)-Holliday junction (HJ) complex. HJ DNA is sandwiched between 2 RuvA tetramers; dsDNA enters through RuvA and exits via RuvB. An RuvB hexamer assembles on each DNA strand where it exits the tetramer. Each RuvB hexamer is contacted by two RuvA subunits (via domain III) on 2 adjacent RuvB subunits; this complex drives branch migration. In the full resolvosome a probable DNA-RuvA(4)-RuvB(12)-RuvC(2) complex forms which resolves the HJ.

It localises to the cytoplasm. The enzyme catalyses ATP + H2O = ADP + phosphate + H(+). In terms of biological role, the RuvA-RuvB-RuvC complex processes Holliday junction (HJ) DNA during genetic recombination and DNA repair, while the RuvA-RuvB complex plays an important role in the rescue of blocked DNA replication forks via replication fork reversal (RFR). RuvA specifically binds to HJ cruciform DNA, conferring on it an open structure. The RuvB hexamer acts as an ATP-dependent pump, pulling dsDNA into and through the RuvAB complex. RuvB forms 2 homohexamers on either side of HJ DNA bound by 1 or 2 RuvA tetramers; 4 subunits per hexamer contact DNA at a time. Coordinated motions by a converter formed by DNA-disengaged RuvB subunits stimulates ATP hydrolysis and nucleotide exchange. Immobilization of the converter enables RuvB to convert the ATP-contained energy into a lever motion, pulling 2 nucleotides of DNA out of the RuvA tetramer per ATP hydrolyzed, thus driving DNA branch migration. The RuvB motors rotate together with the DNA substrate, which together with the progressing nucleotide cycle form the mechanistic basis for DNA recombination by continuous HJ branch migration. Branch migration allows RuvC to scan DNA until it finds its consensus sequence, where it cleaves and resolves cruciform DNA. The protein is Holliday junction branch migration complex subunit RuvB of Clostridium perfringens (strain 13 / Type A).